Here is a 257-residue protein sequence, read N- to C-terminus: Lipid A 4'-phosphatase (257 aa).

The next 6 membrane-spanning stretches (helical) occupy residues 21–41, 85–105, 119–139, 174–194, 201–221, and 225–245; these read FGAF…FRAF, IFFR…IECY, KLKV…NVIL, CSFV…LLFV, ALVP…LSFG, and LSDV…LLAL.

Belongs to the lipid A LpxF 4'-phosphatase family.

Its subcellular location is the cell inner membrane. It participates in bacterial outer membrane biogenesis; LPS lipid A biosynthesis. In terms of biological role, probably removes the 4'-phosphate moiety from lipid A species. Not seen to act on other membrane components, nor does it dephosphorylate the 1-phosphate group of lipid A and/or lipid A precursors. This chain is Lipid A 4'-phosphatase, found in Rhizobium etli (strain ATCC 51251 / DSM 11541 / JCM 21823 / NBRC 15573 / CFN 42).